A 396-amino-acid chain; its full sequence is Elongation factor Tu (396 aa).

Positions 10–206 constitute a tr-type G domain; that stretch reads KPHVNIGTIG…AVDESVPDPV (197 aa). Residues 19–26 form a G1 region; that stretch reads GHVDHGKT. 19–26 is a GTP binding site; that stretch reads GHVDHGKT. Residue Thr26 participates in Mg(2+) binding. The segment at 62–66 is G2; that stretch reads GITIN. The interval 83-86 is G3; the sequence is DAPG. GTP contacts are provided by residues 83–87 and 138–141; these read DAPGH and NKSD. Residues 138–141 are G4; that stretch reads NKSD. The interval 176–178 is G5; sequence SGL.

Belongs to the TRAFAC class translation factor GTPase superfamily. Classic translation factor GTPase family. EF-Tu/EF-1A subfamily. As to quaternary structure, monomer.

The protein localises to the cytoplasm. It catalyses the reaction GTP + H2O = GDP + phosphate + H(+). Its function is as follows. GTP hydrolase that promotes the GTP-dependent binding of aminoacyl-tRNA to the A-site of ribosomes during protein biosynthesis. In Pseudarthrobacter chlorophenolicus (strain ATCC 700700 / DSM 12829 / CIP 107037 / JCM 12360 / KCTC 9906 / NCIMB 13794 / A6) (Arthrobacter chlorophenolicus), this protein is Elongation factor Tu.